A 243-amino-acid polypeptide reads, in one-letter code: Exosome complex component Rrp41 (243 aa).

It belongs to the RNase PH family. Rrp41 subfamily. Component of the archaeal exosome complex. Forms a hexameric ring-like arrangement composed of 3 Rrp41-Rrp42 heterodimers. The hexameric ring associates with a trimer of Rrp4 and/or Csl4 subunits.

The protein resides in the cytoplasm. In terms of biological role, catalytic component of the exosome, which is a complex involved in RNA degradation. Has 3'-&gt;5' exoribonuclease activity. Can also synthesize heteromeric RNA-tails. This Sulfurisphaera tokodaii (strain DSM 16993 / JCM 10545 / NBRC 100140 / 7) (Sulfolobus tokodaii) protein is Exosome complex component Rrp41.